The sequence spans 2690 residues: Non-reducing polyketide synthase pigA (2690 aa).

Residues 96–211 (NILLSPLVVI…AELSRVLQDF (116 aa)) form the Starter acyltransferase (SAT) domain. Catalysis depends on Cys140, which acts as the Nucleophile; for transacylase activity. Residue His258 is the Proton donor/acceptor; for transacylase activity of the active site. The Ketosynthase family 3 (KS3) domain maps to 388–804 (ENDIAVIGMS…GSNASLIVTQ (417 aa)). Catalysis depends on for beta-ketoacyl synthase activity residues Cys553, His688, and His727. The Malonyl-CoA:ACP transacylase (MAT) domain occupies 915 to 1182 (FGGQISTFVG…VQRLAKQHPS (268 aa)). The interval 1296–1426 (LTFVGYQDKD…GKVFFRSVDD (131 aa)) is N-terminal hotdog fold. Residues 1296–1602 (LTFVGYQDKD…YAKVPKMSMS (307 aa)) enclose the PKS/mFAS DH domain. The interval 1323-1600 (LVSGHLIAQT…INYAKVPKMS (278 aa)) is product template (PT) domain. His1327 acts as the Proton acceptor; for dehydratase activity in catalysis. A C-terminal hotdog fold region spans residues 1454–1602 (ADDIIQGRNI…YAKVPKMSMS (149 aa)). The Proton donor; for dehydratase activity role is filled by Asp1510. The region spanning 1657–1731 (PDISGKVRAM…GLLRCIQEAL (75 aa)) is the Carrier 1 domain. An O-(pantetheine 4'-phosphoryl)serine modification is found at Ser1691. The interval 1731 to 1764 (LGPSEGVEEETDNEEGEDGESSENPSVFTPSDAA) is disordered. The segment covering 1736–1751 (GVEEETDNEEGEDGES) has biased composition (acidic residues). Positions 1755-1764 (PSVFTPSDAA) are enriched in polar residues. Residues 1768–1842 (SSAKADVAEF…EFDVKVNGKS (75 aa)) enclose the Carrier 2 domain. Ser1802 carries the O-(pantetheine 4'-phosphoryl)serine modification. Residues 1948–2255 (QTLERIKYLP…EVNIQRIFLA (308 aa)) are methyltransferase domain. Residues 2320–2564 (VTGATGSLGS…LSWTPVNDVA (245 aa)) enclose the Thioester reductase (TE) domain.

It depends on pantetheine 4'-phosphate as a cofactor.

It participates in secondary metabolite biosynthesis. Its function is as follows. Non-reducing polyketide synthase; part of the gene cluster that mediates the biosynthesis of azaphilone pigments (MonAzPs), a complex mixture of compounds with a common azaphilone skeleton very widely used as food colorants. PigA catalyzes the first step of MonAzPs biosynthesis and forms the hexaketide precursor from successive condensations of five malonyl-CoA units, with a simple acetyl-CoA starter unit. The starter acyl transferase (SAT) domain of pigA selects an acetyl-CoA starter unit, and the ketoacyl synthase (KS)-acyl transferase (AT)-acyl carrier protein (ACP) domains extend this starter unit five times with malonyl-CoA in five successive decarboxylative Claisen condensation cycles. The methyltransferase (MT) domain conducts a single C-methylation at C-4, most likely at the pentaketide stage. The reactive hexaketide chain then undergoes a product template (PT) domain-mediated C-2 to C-7 aldol cyclization to afford the first aromatic ring, followed by reductive release of the first pathway intermediate by the NADPH-dependent reductive release (R) domain. The role of esterase pigG is not clear, but it may play at most a supplementary role in the formation of the benzaldehyde produced by the pigA nrPKS. This very reactive benzaldehyde is intercepted by the pigC ketoreductase that to provide the first stable enzyme-free MonAzPs intermediate, 6-(4-hydroxy-2-oxopentyl)-3-methyl-2,4-dioxocyclohexane carbaldehyde, also known as M7PKS-1. The FAD-dependent monooxygenase pigN hydroxylates M7PKS-1 at C-4, which triggers the formation of the pyran ring. PigJ, pigK and pigD are involved in the acetylation of the pyran ring. PigJ and pigK form the two subunits of a dedicated fungal FAS that produces the side chain fatty acyl moiety of MonAzPs and pigD transfers the fatty acyl chain to the C-4 alcohol. PigM and pigO are involved in the elimination of the omega-1 alcohol. PigM acts as an O-acetyltransferase that synthesizes the putative O-11 acetyl intermediate whereas pigO eliminates acetic acid to yield an intermediate with a C10(11) double bond. The dehydration of the C-11 alcohol followed by the reduction of the C6(7) double bond by the NAD(P)H-dependent oxidoreductase pigE increases the electrophilicity of the C-5 ketone of the resulting acyl benzopyran. This in turn sets up the C-5 ketone for an intramolecular Knoevenagel aldol condensation with the C-20 enol of the side chain. This condensation affords the characteristic linear tricyclic carbon skeletons of the yellow pigments that serve as the common precursors for the classical yellow pigments monascin and ankaflavin, orange pigments rubopunctatin and monascorubrin, and red pigments ribropunctamine and monascorubramine. The FAD-dependent oxidoreductase pigF is especially invoved in the biosynthesis of orange and red pigments via desaturation of C6(7). The polypeptide is Non-reducing polyketide synthase pigA (Monascus ruber (Mold)).